The following is a 205-amino-acid chain: Arginine exporter protein ArgO (205 aa).

Transmembrane regions (helical) follow at residues 1–21, 42–62, 67–87, 111–131, 147–167, and 185–205; these read MLAV…PLGP, LCAL…SALL, LLLA…GWGA, ILVT…DTFV, WFAL…ALLA, and LFVG…GFGL.

It belongs to the LysE/ArgO transporter (TC 2.A.75) family.

The protein resides in the cell inner membrane. The catalysed reaction is L-arginine(in) = L-arginine(out). Involved in the export of arginine. Important to control the intracellular level of arginine and the correct balance between arginine and lysine. The sequence is that of Arginine exporter protein ArgO from Yersinia pseudotuberculosis serotype IB (strain PB1/+).